A 376-amino-acid chain; its full sequence is Protein-glutamate methylesterase/protein-glutamine glutaminase (376 aa).

The 118-residue stretch at 4 to 121 folds into the Response regulatory domain; sequence KVLVVDDSSF…ARNRDEAVSL (118 aa). The residue at position 55 (Asp-55) is a 4-aspartylphosphate. The segment at 142 to 161 is disordered; that stretch reads SSQSTSTVESRTATTRTATS. Over residues 145–161 the composition is skewed to low complexity; the sequence is STSTVESRTATTRTATS. One can recognise a CheB-type methylesterase domain in the interval 183 to 376; it reads TGKKYQLTAI…ERMLVEVGLK (194 aa). Active-site residues include Ser-195, His-222, and Asp-318.

It belongs to the CheB family. Phosphorylated by CheA. Phosphorylation of the N-terminal regulatory domain activates the methylesterase activity.

Its subcellular location is the cytoplasm. It catalyses the reaction [protein]-L-glutamate 5-O-methyl ester + H2O = L-glutamyl-[protein] + methanol + H(+). The enzyme catalyses L-glutaminyl-[protein] + H2O = L-glutamyl-[protein] + NH4(+). In terms of biological role, involved in chemotaxis. Part of a chemotaxis signal transduction system that modulates chemotaxis in response to various stimuli. Catalyzes the demethylation of specific methylglutamate residues introduced into the chemoreceptors (methyl-accepting chemotaxis proteins or MCP) by CheR. Also mediates the irreversible deamidation of specific glutamine residues to glutamic acid. The chain is Protein-glutamate methylesterase/protein-glutamine glutaminase from Aliivibrio fischeri (strain ATCC 700601 / ES114) (Vibrio fischeri).